The following is a 166-amino-acid chain: Emerin homolog 1 (166 aa).

Residues methionine 1–serine 44 form the LEM domain. The Nuclear segment spans residues methionine 1–leucine 127. The segment at isoleucine 62–glutamate 99 is disordered. Residues glycine 128–isoleucine 148 form a helical membrane-spanning segment. Residues glutamate 149–isoleucine 166 lie on the Perinuclear space side of the membrane.

As to quaternary structure, interacts with lmn-1 and baf-1. In terms of tissue distribution, ubiquitous. Expressed in all cells, except in cells undergoing spermatogenesis. High expression in hypodermis, neurons, pharyngeal muscle, body wall muscle and gonadal sheath.

The protein localises to the nucleus inner membrane. Its subcellular location is the nucleus envelope. Functionally, nuclear lamina-associated inner nuclear membrane protein that is involved in cell division, nuclear structure organization, maintenance of nuclear envelope integrity and nuclear envelope reformation after mitosis. Involved in chromosome segregation and cell division, probably via its interaction with the nuclear intermediate filament protein lmn-1, the main component of nuclear lamina. Required to organize the distribution of lmn-1, nuclear pore complexes (NPCs) and chromatin in mitotically active cells. Together with lem-2, plays a role in baf-1 enrichment at the nuclear envelope in anaphase. Together with lem-2, involved in muscle cell attachment to hypodermal cells, as well as muscle cell location and sarcomere organization. May play a role in radiation-induced DNA damage repair response. May repress binding of transcription factor pha-4 with target sequences in pharyngeal cells. This Caenorhabditis elegans protein is Emerin homolog 1 (emr-1).